The following is a 122-amino-acid chain: Large ribosomal subunit protein uL14 (122 aa).

This sequence belongs to the universal ribosomal protein uL14 family. Part of the 50S ribosomal subunit. Forms a cluster with proteins L3 and L19. In the 70S ribosome, L14 and L19 interact and together make contacts with the 16S rRNA in bridges B5 and B8.

Its function is as follows. Binds to 23S rRNA. Forms part of two intersubunit bridges in the 70S ribosome. The sequence is that of Large ribosomal subunit protein uL14 from Bacillus subtilis (strain 168).